The sequence spans 203 residues: MSDSEATTSTDRSESNSTATIHNPEESRLKALLEPAVLASRLYLEDVSIHVAGSHRTVHVVVDLPQEETGGVSLDAIADVSRGLSDILDNDPHDDGRPYDLEVSSPGVSRPLTEPRHWHRARGRMVRVNVIQGDNLLGRIASVGDDAVTLIPEHEVKKGMKPKQGEPITIPFDRIRQGKVEIEFSHLHEAALEDEHNGPSEEA.

The span at 1–21 (MSDSEATTSTDRSESNSTATI) shows a compositional bias: polar residues. The tract at residues 1 to 23 (MSDSEATTSTDRSESNSTATIHN) is disordered.

It belongs to the RimP family.

The protein resides in the cytoplasm. Required for maturation of 30S ribosomal subunits. This is Ribosome maturation factor RimP from Paenarthrobacter aurescens (strain TC1).